We begin with the raw amino-acid sequence, 138 residues long: Small ribosomal subunit protein uS11c (138 aa).

The tract at residues 1–24 (MAKSPPRSGSRRPGRIGSRKSGRR) is disordered. Positions 9 to 24 (GSRRPGRIGSRKSGRR) are enriched in basic residues.

The protein belongs to the universal ribosomal protein uS11 family. Part of the 30S ribosomal subunit.

The protein localises to the plastid. It localises to the chloroplast. This Citrus sinensis (Sweet orange) protein is Small ribosomal subunit protein uS11c.